A 355-amino-acid polypeptide reads, in one-letter code: Tetraacyldisaccharide 4'-kinase (355 aa).

49-56 (SAGGTGKT) is a binding site for ATP.

It belongs to the LpxK family.

It catalyses the reaction a lipid A disaccharide + ATP = a lipid IVA + ADP + H(+). It participates in glycolipid biosynthesis; lipid IV(A) biosynthesis; lipid IV(A) from (3R)-3-hydroxytetradecanoyl-[acyl-carrier-protein] and UDP-N-acetyl-alpha-D-glucosamine: step 6/6. Transfers the gamma-phosphate of ATP to the 4'-position of a tetraacyldisaccharide 1-phosphate intermediate (termed DS-1-P) to form tetraacyldisaccharide 1,4'-bis-phosphate (lipid IVA). The polypeptide is Tetraacyldisaccharide 4'-kinase (Chlorobium phaeobacteroides (strain DSM 266 / SMG 266 / 2430)).